A 200-amino-acid chain; its full sequence is Probable nicotinate-nucleotide adenylyltransferase (200 aa).

It belongs to the NadD family.

It catalyses the reaction nicotinate beta-D-ribonucleotide + ATP + H(+) = deamido-NAD(+) + diphosphate. It functions in the pathway cofactor biosynthesis; NAD(+) biosynthesis; deamido-NAD(+) from nicotinate D-ribonucleotide: step 1/1. Catalyzes the reversible adenylation of nicotinate mononucleotide (NaMN) to nicotinic acid adenine dinucleotide (NaAD). This is Probable nicotinate-nucleotide adenylyltransferase from Clostridium tetani (strain Massachusetts / E88).